The sequence spans 443 residues: Exodeoxyribonuclease 7 large subunit (443 aa).

It belongs to the XseA family. As to quaternary structure, heterooligomer composed of large and small subunits.

It localises to the cytoplasm. It catalyses the reaction Exonucleolytic cleavage in either 5'- to 3'- or 3'- to 5'-direction to yield nucleoside 5'-phosphates.. Its function is as follows. Bidirectionally degrades single-stranded DNA into large acid-insoluble oligonucleotides, which are then degraded further into small acid-soluble oligonucleotides. The protein is Exodeoxyribonuclease 7 large subunit of Vibrio parahaemolyticus serotype O3:K6 (strain RIMD 2210633).